We begin with the raw amino-acid sequence, 116 residues long: Iron-sulfur cluster insertion protein ErpA (116 aa).

3 residues coordinate iron-sulfur cluster: C44, C108, and C110.

Belongs to the HesB/IscA family. As to quaternary structure, homodimer. Iron-sulfur cluster is required as a cofactor.

Required for insertion of 4Fe-4S clusters for at least IspG. The chain is Iron-sulfur cluster insertion protein ErpA from Shewanella piezotolerans (strain WP3 / JCM 13877).